The chain runs to 77 residues: Large ribosomal subunit protein uL24 (77 aa).

Residues 42 to 61 (KKHQKPSQTNANGGVVESEG) form a disordered region.

Belongs to the universal ribosomal protein uL24 family. Part of the 50S ribosomal subunit.

Its function is as follows. One of two assembly initiator proteins, it binds directly to the 5'-end of the 23S rRNA, where it nucleates assembly of the 50S subunit. Functionally, one of the proteins that surrounds the polypeptide exit tunnel on the outside of the subunit. The sequence is that of Large ribosomal subunit protein uL24 from Lactobacillus helveticus (strain DPC 4571).